The sequence spans 292 residues: Homoserine kinase (292 aa).

84-94 (PLSRGLGSSSA) is a binding site for ATP.

Belongs to the GHMP kinase family. Homoserine kinase subfamily.

It localises to the cytoplasm. It carries out the reaction L-homoserine + ATP = O-phospho-L-homoserine + ADP + H(+). It participates in amino-acid biosynthesis; L-threonine biosynthesis; L-threonine from L-aspartate: step 4/5. In terms of biological role, catalyzes the ATP-dependent phosphorylation of L-homoserine to L-homoserine phosphate. The chain is Homoserine kinase from Campylobacter jejuni subsp. jejuni serotype O:23/36 (strain 81-176).